Here is a 491-residue protein sequence, read N- to C-terminus: Glycogen synthase 1 (491 aa).

Residue Lys15 participates in ADP-alpha-D-glucose binding.

It belongs to the glycosyltransferase 1 family. Bacterial/plant glycogen synthase subfamily.

The enzyme catalyses [(1-&gt;4)-alpha-D-glucosyl](n) + ADP-alpha-D-glucose = [(1-&gt;4)-alpha-D-glucosyl](n+1) + ADP + H(+). It functions in the pathway glycan biosynthesis; glycogen biosynthesis. Its function is as follows. Synthesizes alpha-1,4-glucan chains using ADP-glucose. The chain is Glycogen synthase 1 from Synechococcus sp. (strain JA-2-3B'a(2-13)) (Cyanobacteria bacterium Yellowstone B-Prime).